The primary structure comprises 245 residues: Pyridoxine 5'-phosphate synthase (245 aa).

Asn-7 serves as a coordination point for 3-amino-2-oxopropyl phosphate. A 1-deoxy-D-xylulose 5-phosphate-binding site is contributed by 9 to 10 (DH). Arg-18 provides a ligand contact to 3-amino-2-oxopropyl phosphate. His-43 acts as the Proton acceptor in catalysis. Residues Arg-45 and His-50 each coordinate 1-deoxy-D-xylulose 5-phosphate. Residue Glu-70 is the Proton acceptor of the active site. A 1-deoxy-D-xylulose 5-phosphate-binding site is contributed by Thr-100. The active-site Proton donor is the His-190. Residues Gly-191 and 212-213 (GH) each bind 3-amino-2-oxopropyl phosphate.

The protein belongs to the PNP synthase family. As to quaternary structure, homooctamer; tetramer of dimers.

Its subcellular location is the cytoplasm. It carries out the reaction 3-amino-2-oxopropyl phosphate + 1-deoxy-D-xylulose 5-phosphate = pyridoxine 5'-phosphate + phosphate + 2 H2O + H(+). Its pathway is cofactor biosynthesis; pyridoxine 5'-phosphate biosynthesis; pyridoxine 5'-phosphate from D-erythrose 4-phosphate: step 5/5. Catalyzes the complicated ring closure reaction between the two acyclic compounds 1-deoxy-D-xylulose-5-phosphate (DXP) and 3-amino-2-oxopropyl phosphate (1-amino-acetone-3-phosphate or AAP) to form pyridoxine 5'-phosphate (PNP) and inorganic phosphate. The chain is Pyridoxine 5'-phosphate synthase from Prochlorococcus marinus (strain NATL1A).